A 259-amino-acid polypeptide reads, in one-letter code: Methyltransferase sdnD (259 aa).

The protein belongs to the FkbM methyltransferase family.

The protein operates within antibiotic biosynthesis. In terms of biological role, methyltransferase; part of the gene cluster that mediates the biosynthesis of sordarin and hypoxysordarin, glycoside antibiotics with a unique tetracyclic diterpene aglycone structure. First, the geranylgeranyl diphosphate synthase sdnC constructs GGDP from farnesyl diphosphate and isopentenyl diphosphate. The diterpene cyclase sdnA then catalyzes the cyclization of GGDP to afford cycloaraneosene. Cycloaraneosene is then hydroxylated four times by the putative cytochrome P450 monooxygenases sdnB, sdnE, sdnF and sdnH to give a hydroxylated cycloaraneosene derivative such as cycloaraneosene-8,9,13,19-tetraol. Although the order of the hydroxylations is unclear, at least C8, C9 and C13 of the cycloaraneosene skeleton are hydroxylated before the sordaricin formation. Dehydration of the 13-hydroxy group of the hydroxylated cycloaraneosene derivative might be catalyzed by an unassigned hypothetical protein such as sdnG and sdnP to construct the cyclopentadiene moiety. The FAD-dependent oxidoreductase sdnN is proposed to catalyze the oxidation at C9 of the hydroxylated cycloaraneosene derivative and also catalyze the Baeyer-Villiger oxidation to give the lactone intermediate. The presumed lactone intermediate would be hydrolyzed to give an acrolein moiety and a carboxylate moiety. Then, [4+2]cycloaddition would occur between the acrolein moiety and the cyclopentadiene moiety to give sordaricin. SdnN might also be involved in the [4+2]cycloaddition after the hypothesized oxidation to accommodate the oxidized product and prompt the [4+2]cycloaddition. GDP-6-deoxy-D-altrose may be biosynthesized from GDP-D-mannose by the putative GDP-mannose-4,6-dehydratase sdnI and the short-chain dehydrogenase sdnK. The glycosyltransferase sdnJ catalyzes the attachment of 6-deoxy-D-altrose onto the 19-hydroxy group of sordaricin to give 4'-O-demethylsordarin. The methyltransferase sdnD would complete the biosynthesis of sordarin. Sordarin can be further modified into hypoxysordarin. The unique acyl chain at the 3'-hydroxy group of hypoxysordarin would be constructed by an iterative type I PKS sdnO and the trans-acting polyketide methyltransferase sdnL. SdnL would be responsible for the introduction of an alpha-methyl group of the polyketide chain. Alternatively, the beta-lactamase-like protein sdnR might be responsible for the cleavage and transfer of the polyketide chain from the PKS sdnO to sordarin. Two putative cytochrome P450 monooxygenases, sdnQ and sdnT, might catalyze the epoxidations of the polyketide chain to complete the biosynthesis of hypoxysordarin. Transcriptional regulators sdnM and sdnS are presumably encoded for the transcriptional regulation of the expression of the sdn gene cluster. The sequence is that of Methyltransferase sdnD from Sordaria araneosa (Pleurage araneosa).